The primary structure comprises 270 residues: Interleukin-33 (270 aa).

Positions 1-65 are homeodomain-like HTH domain; sequence MKPKMKYSTN…EACYFRRETT (65 aa). Positions 1–94 are excised as a propeptide; that stretch reads MKPKMKYSTN…CQQQSTVECF (94 aa). An interaction with RELA region spans residues 64–111; sequence TTKRPSLKTGRKHKRHLVLAACQQQSTVECFAFGISGVQKYTRALHDS.

This sequence belongs to the IL-1 family. Highly divergent. Forms a 1:1:1 heterotrimeric complex with its primary high-affinity receptor IL1RL1 and the coreceptor IL1RAP. Interacts with cargo receptor TMED10; the interaction mediates the translocation from the cytoplasm into the ERGIC (endoplasmic reticulum-Golgi intermediate compartment) and thereby secretion. As to quaternary structure, (Microbial infection) Interacts (in reduced form) with H.polygyrus ARI. Post-translationally, the full-length protein can be released from cells and is able to signal via the IL1RL1/ST2 receptor. However, proteolytic processing by CELA1, CSTG/cathepsin G and ELANE/neutrophil elastase produces C-terminal peptides that are more active than the unprocessed full length protein. May also be proteolytically processed by calpains. Proteolytic cleavage mediated by apoptotic caspases including CASP3 and CASP7 results in IL33 inactivation. In vitro proteolytic cleavage by CASP1 was reported but could not be confirmed in vivo suggesting that IL33 is probably not a direct substrate for that caspase. Expressed at high level in high endothelial venules found in tonsils, Peyer patches and mesenteric lymph nodes. Almost undetectable in placenta.

It localises to the nucleus. Its subcellular location is the chromosome. The protein localises to the cytoplasm. It is found in the cytoplasmic vesicle. The protein resides in the secretory vesicle. It localises to the secreted. Its function is as follows. Cytokine that binds to and signals through the IL1RL1/ST2 receptor which in turn activates NF-kappa-B and MAPK signaling pathways in target cells. Involved in the maturation of Th2 cells inducing the secretion of T-helper type 2-associated cytokines. Also involved in activation of mast cells, basophils, eosinophils and natural killer cells. Acts as an enhancer of polarization of alternatively activated macrophages. Acts as a chemoattractant for Th2 cells, and may function as an 'alarmin', that amplifies immune responses during tissue injury. Induces rapid UCP2-dependent mitochondrial rewiring that attenuates the generation of reactive oxygen species and preserves the integrity of Krebs cycle required for persistent production of itaconate and subsequent GATA3-dependent differentiation of inflammation-resolving alternatively activated macrophages. In quiescent endothelia the uncleaved form is constitutively and abundantly expressed, and acts as a chromatin-associated nuclear factor with transcriptional repressor properties, it may sequester nuclear NF-kappaB/RELA, lowering expression of its targets. This form is rapidely lost upon angiogenic or pro-inflammatory activation. In Homo sapiens (Human), this protein is Interleukin-33.